Reading from the N-terminus, the 193-residue chain is dCTP deaminase (193 aa).

Residues 110 to 115, D128, 136 to 138, Y171, K178, and Q182 contribute to the dCTP site; these read RSSLAR and VLE. E138 acts as the Proton donor/acceptor in catalysis. The interval 169-193 is disordered; that stretch reads RPYNRRQDAKYKDQQGAVASRIDKD.

This sequence belongs to the dCTP deaminase family. As to quaternary structure, homotrimer.

The enzyme catalyses dCTP + H2O + H(+) = dUTP + NH4(+). The protein operates within pyrimidine metabolism; dUMP biosynthesis; dUMP from dCTP (dUTP route): step 1/2. Catalyzes the deamination of dCTP to dUTP. This Pectobacterium atrosepticum (strain SCRI 1043 / ATCC BAA-672) (Erwinia carotovora subsp. atroseptica) protein is dCTP deaminase.